Consider the following 232-residue polypeptide: MGRELQKRKKRSSRAKVQTHTIKKKVLNPQGSGIVAKAWNKKETLSQNYSRFGLVAKLGTAAGGMAKKSAAANYAGITKDDPLAVKSADRGLFEVREVKVERDASGKIVKVLRSDNPLNDPLNEIESDSESEEPKPKNPTHDIEWHGISDDRQEMIAQSSRPEVVRMLEEEASRPVEKTVRYQSERELEWLQRLVAKHGDDVAAMVRDIKLNPMQQTKGDITKRLRKAGLLQ.

Residues 1 to 14 (MGRELQKRKKRSSR) show a composition bias toward basic residues. Disordered stretches follow at residues 1–20 (MGRE…VQTH) and 113–161 (RSDN…QSSR). Positions 132 to 154 (EEPKPKNPTHDIEWHGISDDRQE) are enriched in basic and acidic residues.

The protein belongs to the NOP16 family. As to quaternary structure, component of the pre-66S ribosomal particle.

It is found in the nucleus. The protein resides in the nucleolus. Involved in the biogenesis of the 60S ribosomal subunit. The chain is Nucleolar protein 16 (nop-16) from Neurospora crassa (strain ATCC 24698 / 74-OR23-1A / CBS 708.71 / DSM 1257 / FGSC 987).